We begin with the raw amino-acid sequence, 264 residues long: MARCGAGRAAALGLVLRLLLGLRTGPEAAPAPTSAPAHTLVQVSGPRAGSCPTDTFKCLTSGYCVPLSWRCDGDRDCSDGSDEEECRIEPCAQNRQCQPQPALPCSCDNISGCSAGSDKNLNCSRSPCQEGELRCILDDVCIPHTWRCDGHPDCPDSSDELSCDTDTETDKIFQEENATTSMSSMIVEKETSFRNVTVASAGHPSRNPNAYGVIAAAGVLSAILVSATILILLRLRGQGYLPPTGLLVAVKESLLLSERKTSLI.

An N-terminal signal peptide occupies residues 1–28 (MARCGAGRAAALGLVLRLLLGLRTGPEA). The region spanning 50–87 (SCPTDTFKCLTSGYCVPLSWRCDGDRDCSDGSDEEECR) is the LDL-receptor class A 1 domain. 3 disulfides stabilise this stretch: Cys-51-Cys-64, Cys-58-Cys-77, and Cys-71-Cys-86. The Ca(2+) site is built by Trp-69, Asp-72, Asp-74, Asp-76, Asp-82, and Glu-83. An N-linked (GlcNAc...) asparagine glycan is attached at Asn-122. Residues 127–164 (PCQEGELRCILDDVCIPHTWRCDGHPDCPDSSDELSCD) form the LDL-receptor class A 2 domain. Disulfide bonds link Cys-128-Cys-141, Cys-135-Cys-154, and Cys-148-Cys-163. Ca(2+)-binding residues include Trp-146, Asp-149, His-151, Asp-153, Asp-159, and Glu-160. N-linked (GlcNAc...) asparagine glycosylation occurs at Asn-195. Residues 213-233 (VIAAAGVLSAILVSATILILL) traverse the membrane as a helical segment.

Interacts (via LDL-receptor class A domains) with TCN2.

It is found in the cell membrane. In terms of biological role, receptor for transcobalamin saturated with cobalamin (TCbl). Plays an important role in cobalamin uptake. Plasma membrane protein that is expressed on follicular dendritic cells (FDC) and mediates interaction with germinal center B cells. Functions as a costimulator to promote B cell responses to antigenic stimuli; promotes B cell differentiation and proliferation. Germinal center-B (GC-B) cells differentiate into memory B-cells and plasma cells (PC) through interaction with T-cells and follicular dendritic cells (FDC). CD320 augments the proliferation of PC precursors generated by IL-10. The sequence is that of CD320 antigen (Cd320) from Rattus norvegicus (Rat).